Here is a 248-residue protein sequence, read N- to C-terminus: 2-acetamido-2-deoxy-D-galactose-binding seed lectin 2 (248 aa).

An N-linked (GlcNAc...) asparagine; partial glycan is attached at N119. Mn(2+) contacts are provided by E128 and D130. Ca(2+)-binding residues include D130, Y132, N134, and D138. Residues D138 and H144 each coordinate Mn(2+).

Belongs to the leguminous lectin family.

The polypeptide is 2-acetamido-2-deoxy-D-galactose-binding seed lectin 2 (Cytisus scoparius (Scotch broom)).